We begin with the raw amino-acid sequence, 200 residues long: Probable UbiX-like flavin prenyltransferase (200 aa).

Residues 9–11 (GAT), serine 36, 87–90 (SMKT), and arginine 122 each bind FMN.

It belongs to the UbiX/PAD1 family. YclB subfamily. Homododecamer.

It carries out the reaction dimethylallyl phosphate + FMNH2 = prenylated FMNH2 + phosphate. In terms of biological role, involved in the non-oxidative decarboxylation and detoxification of phenolic derivatives under both aerobic and anaerobic conditions. Flavin prenyltransferase that catalyzes the synthesis of the prenylated FMN cofactor (prenyl-FMN) for phenolic acid decarboxylase. The polypeptide is Probable UbiX-like flavin prenyltransferase (Streptomyces sp. (strain D7)).